We begin with the raw amino-acid sequence, 300 residues long: Ubiquitin thioesterase otu2 (300 aa).

Disordered stretches follow at residues 23 to 73 (RKQL…QQED) and 89 to 141 (TAEK…SEKM). A compositionally biased stretch (basic and acidic residues) spans 48–61 (LSQKHATERQKLDK). Residues 62-71 (GDEETNETQQ) show a composition bias toward acidic residues. Polar residues predominate over residues 89-109 (TAEKSSVQSSLNTKENTPQQP). Residues 115–141 (RQKERLERRKAEMKKMSEQAELESEKM) show a composition bias toward basic and acidic residues. One can recognise an OTU domain in the interval 161–298 (LVAVDIPADG…GAHYNSLLYR (138 aa)).

It localises to the cytoplasm. It carries out the reaction Thiol-dependent hydrolysis of ester, thioester, amide, peptide and isopeptide bonds formed by the C-terminal Gly of ubiquitin (a 76-residue protein attached to proteins as an intracellular targeting signal).. Hydrolase that can remove conjugated ubiquitin from proteins and may therefore play an important regulatory role at the level of protein turnover by preventing degradation. The chain is Ubiquitin thioesterase otu2 (otu2) from Schizosaccharomyces pombe (strain 972 / ATCC 24843) (Fission yeast).